The sequence spans 159 residues: Cytochrome c-type biogenesis protein CcmE (159 aa).

Over methionine 1–arginine 8 the chain is Cytoplasmic. The helical; Signal-anchor for type II membrane protein transmembrane segment at leucine 9 to alanine 29 threads the bilayer. At leucine 30 to proline 159 the chain is on the periplasmic side. 2 residues coordinate heme: histidine 130 and tyrosine 134. Residues histidine 130–proline 159 form a disordered region.

It belongs to the CcmE/CycJ family.

The protein localises to the cell inner membrane. Functionally, heme chaperone required for the biogenesis of c-type cytochromes. Transiently binds heme delivered by CcmC and transfers the heme to apo-cytochromes in a process facilitated by CcmF and CcmH. This Cronobacter sakazakii (strain ATCC BAA-894) (Enterobacter sakazakii) protein is Cytochrome c-type biogenesis protein CcmE.